The sequence spans 919 residues: Probable dipeptidyl-aminopeptidase B (919 aa).

A compositionally biased stretch (basic and acidic residues) spans M1–T10. The segment at M1–G53 is disordered. At M1–R92 the chain is on the cytoplasmic side. The segment covering S21–S38 has biased composition (low complexity). Residues I93–L113 traverse the membrane as a helical; Signal-anchor for type II membrane protein segment. Topologically, residues T114–P919 are vacuolar. N-linked (GlcNAc...) asparagine glycosylation is found at N200, N352, and N643. S757 (charge relay system) is an active-site residue. Residue N811 is glycosylated (N-linked (GlcNAc...) asparagine). Residues D834 and H867 each act as charge relay system in the active site.

The protein belongs to the peptidase S9B family.

Its subcellular location is the vacuole membrane. It catalyses the reaction Release of an N-terminal dipeptide, Xaa-Yaa-|-Zaa-, from a polypeptide, preferentially when Yaa is Pro, provided Zaa is neither Pro nor hydroxyproline.. Functionally, type IV dipeptidyl-peptidase which removes N-terminal dipeptides sequentially from polypeptides having unsubstituted N-termini provided that the penultimate residue is proline. This Aspergillus fumigatus (strain CBS 144.89 / FGSC A1163 / CEA10) (Neosartorya fumigata) protein is Probable dipeptidyl-aminopeptidase B (dapB).